The following is a 203-amino-acid chain: Protein GrpE (203 aa).

The segment at 1 to 38 is disordered; it reads MTQDQTAEQMPAAESADQSADQGPAAESAAPPAVDSER.

This sequence belongs to the GrpE family. As to quaternary structure, homodimer.

It localises to the cytoplasm. Participates actively in the response to hyperosmotic and heat shock by preventing the aggregation of stress-denatured proteins, in association with DnaK and GrpE. It is the nucleotide exchange factor for DnaK and may function as a thermosensor. Unfolded proteins bind initially to DnaJ; upon interaction with the DnaJ-bound protein, DnaK hydrolyzes its bound ATP, resulting in the formation of a stable complex. GrpE releases ADP from DnaK; ATP binding to DnaK triggers the release of the substrate protein, thus completing the reaction cycle. Several rounds of ATP-dependent interactions between DnaJ, DnaK and GrpE are required for fully efficient folding. This chain is Protein GrpE, found in Paramagnetospirillum magneticum (strain ATCC 700264 / AMB-1) (Magnetospirillum magneticum).